A 1338-amino-acid polypeptide reads, in one-letter code: Aldehyde oxidase (1338 aa).

In terms of domain architecture, 2Fe-2S ferredoxin-type spans 5-92 (SELLFYVNGR…GAAVTTVEGI (88 aa)). Residues C44, C49, C52, and C74 each coordinate [2Fe-2S] cluster. Mo-molybdopterin is bound at residue Q113. 4 residues coordinate [2Fe-2S] cluster: C114, C117, C149, and C151. C151 provides a ligand contact to Mo-molybdopterin. Residues 236–421 (FGSERMMWFS…VSVNIPYSRK (186 aa)) enclose the FAD-binding PCMH-type domain. Residues 264–271 (VIMGNTSV), A345, S354, H358, D367, and L411 contribute to the FAD site. Mo-molybdopterin contacts are provided by residues 806–807 (AF) and M1047. S1068 is modified (phosphoserine). Residues 1088–1091 (GSVV), Q1203, and L1268 contribute to the Mo-molybdopterin site. The active-site Proton acceptor; for azaheterocycle hydroxylase activity is E1270.

This sequence belongs to the xanthine dehydrogenase family. As to quaternary structure, homodimer. [2Fe-2S] cluster serves as cofactor. Requires FAD as cofactor. Mo-molybdopterin is required as a cofactor. Abundant in liver, expressed in adipose tissue and at lower levels in lung, skeletal muscle, pancreas. In contrast to mice, no significant gender difference in AOX1 expression level (at protein level).

Its subcellular location is the cytoplasm. The enzyme catalyses an aldehyde + O2 + H2O = a carboxylate + H2O2 + H(+). It catalyses the reaction retinal + O2 + H2O = retinoate + H2O2 + H(+). Its activity is regulated as follows. Is very potently inhibited by raloxifene. Also inhibited by estradiol, ethinyl estradiol, hydralazine, menadione, isovanillin and thioridazine. Not inhibited by allopurinol, a xanthine dehydrogenase potent inhibitor. Its function is as follows. Oxidase with broad substrate specificity, oxidizing aromatic azaheterocycles, such as N1-methylnicotinamide, N-methylphthalazinium and phthalazine, as well as aldehydes, such as benzaldehyde, retinal, pyridoxal, and vanillin. Plays a key role in the metabolism of xenobiotics and drugs containing aromatic azaheterocyclic substituents. Participates in the bioactivation of prodrugs such as famciclovir, catalyzing the oxidation step from 6-deoxypenciclovir to penciclovir, which is a potent antiviral agent. Is probably involved in the regulation of reactive oxygen species homeostasis. May be a prominent source of superoxide generation via the one-electron reduction of molecular oxygen. May also catalyze nitric oxide (NO) production via the reduction of nitrite to NO with NADH or aldehyde as electron donor. May play a role in adipogenesis. The polypeptide is Aldehyde oxidase (Homo sapiens (Human)).